Consider the following 506-residue polypeptide: Cysteine--tRNA ligase (506 aa).

Residue Cys34 participates in Zn(2+) binding. Positions 36-46 match the 'HIGH' region motif; that stretch reads PTVYDFAHIGN. Cys230, His269, and Glu273 together coordinate Zn(2+). Positions 302 to 306 match the 'KMSKS' region motif; the sequence is KMSKS. Lys305 is an ATP binding site.

This sequence belongs to the class-I aminoacyl-tRNA synthetase family. Monomer. Requires Zn(2+) as cofactor.

It localises to the cytoplasm. The catalysed reaction is tRNA(Cys) + L-cysteine + ATP = L-cysteinyl-tRNA(Cys) + AMP + diphosphate. The polypeptide is Cysteine--tRNA ligase (Brucella abortus (strain S19)).